Here is a 325-residue protein sequence, read N- to C-terminus: ATP-dependent 6-phosphofructokinase (325 aa).

Residue G12 participates in ATP binding. 22 to 26 (RTIVK) provides a ligand contact to ADP. ATP contacts are provided by residues 73–74 (RY) and 103–106 (GDGS). Residue D104 coordinates Mg(2+). Residue 126-128 (TID) coordinates substrate. Residue D128 is the Proton acceptor of the active site. R155 provides a ligand contact to ADP. 170–172 (MGH) lines the substrate pocket. ADP contacts are provided by residues 186–188 (GAE), K213, and 215–217 (KRS). Residues E224, R246, and 252 to 255 (HTQR) contribute to the substrate site.

This sequence belongs to the phosphofructokinase type A (PFKA) family. ATP-dependent PFK group I subfamily. Prokaryotic clade 'B1' sub-subfamily. In terms of assembly, homotetramer. Mg(2+) is required as a cofactor.

It localises to the cytoplasm. The catalysed reaction is beta-D-fructose 6-phosphate + ATP = beta-D-fructose 1,6-bisphosphate + ADP + H(+). Its pathway is carbohydrate degradation; glycolysis; D-glyceraldehyde 3-phosphate and glycerone phosphate from D-glucose: step 3/4. With respect to regulation, allosterically activated by ADP and other diphosphonucleosides, and allosterically inhibited by phosphoenolpyruvate. In terms of biological role, catalyzes the phosphorylation of D-fructose 6-phosphate to fructose 1,6-bisphosphate by ATP, the first committing step of glycolysis. The polypeptide is ATP-dependent 6-phosphofructokinase (Mycoplasma mobile (strain ATCC 43663 / 163K / NCTC 11711) (Mesomycoplasma mobile)).